We begin with the raw amino-acid sequence, 1438 residues long: Membrane-anchored lipid-binding protein YSP2 (1438 aa).

Residues 1–17 show a composition bias toward basic and acidic residues; that stretch reads MRDEATRKKRSFSDGHF. Disordered stretches follow at residues 1–97, 174–194, 200–219, 285–308, 338–418, 455–485, and 505–543; these read MRDE…SHTP, KVKH…NERP, QKDD…SAPN, QQQH…QNPN, TSGP…KVKF, DENN…LGPK, and SQSN…RYSS. Over 1 to 1277 the chain is Cytoplasmic; sequence MRDEATRKKR…SAFSMLQQVN (1277 aa). At Ser-13 the chain carries Phosphoserine. Residues 18-29 are compositionally biased toward basic residues; the sequence is FKKLKLMSRKKQ. A compositionally biased stretch (basic and acidic residues) spans 30 to 44; sequence PVMERSKTTRTRKES. Residues 45–58 show a composition bias toward low complexity; it reads TNSAAKSSLSLRRA. Polar residues predominate over residues 74 to 97; sequence IGSTNEGVAGNSGSNSPAQYSHTP. 2 stretches are compositionally biased toward low complexity: residues 286–298 and 374–398; these read QQHP…GPLP and PTNT…ANSN. Ser-411 carries the phosphoserine modification. Positions 455–470 are enriched in low complexity; sequence DENNTNNNPNASSTNL. Residues 471 to 485 are compositionally biased toward polar residues; the sequence is SHISKSNVNNNLGPK. A Phosphoserine modification is found at Ser-596. A GRAM domain is found at 648–716; sequence EFHTLFKDCD…KEIVQIEKKT (69 aa). The tract at residues 777 to 843 is disordered; that stretch reads SSSAFFDDSD…LGPNKHSPTT (67 aa). Residues 783–800 show a composition bias toward acidic residues; it reads DDSDDNDDDGDLDDDDPD. Residues 818 to 832 show a composition bias toward polar residues; the sequence is NESNDLGKNQKSTNY. Residues 851–1018 form the VASt 1 domain; sequence NDHLVIEANI…EIKKILSDED (168 aa). Ser-1032 is subject to Phosphoserine. One can recognise a VASt 2 domain in the interval 1059 to 1225; that stretch reads DDTVIDEKIN…DLKKIISNAS (167 aa). Positions 1225–1257 are disordered; sequence SSTKKKSRRRGKTVNKRKSSPSTIKNEKNEENF. Over residues 1227-1243 the composition is skewed to basic residues; the sequence is TKKKSRRRGKTVNKRKS. Residues 1278 to 1298 form a helical membrane-spanning segment; that stretch reads ITSVQGIMTIISFFICLIFFF. The Lumenal segment spans residues 1299–1438; the sequence is RLLFHSKNTS…DNTSATNQLL (140 aa). Residues Asn-1306, Asn-1373, and Asn-1430 are each glycosylated (N-linked (GlcNAc...) asparagine).

This sequence belongs to the YSP2 family.

Its subcellular location is the mitochondrion membrane. The protein localises to the endoplasmic reticulum membrane. Its function is as follows. Involved in induction of programmed cell death in response to reactive oxygen species (ROS). May be involved in sterol transfer between intracellular membranes. This is Membrane-anchored lipid-binding protein YSP2 from Saccharomyces cerevisiae (strain ATCC 204508 / S288c) (Baker's yeast).